A 476-amino-acid polypeptide reads, in one-letter code: MRVLHVCSELFPLLKTGGLADVVGALPAAQIAEGADVRVMLPGFPDLRRGIPDTVLVREIDTFAGRVSLRYGHYQGIGIYLIDAPGLYDRAGSPYHDQSLHAYADNYRRFALLGWMACELACGLDGYWRPEVVHAHDWHAGLACAYLAARGRPARSVFTVHNLAYQGLFSGHHLAEIQLPAAFFQMYGLEFYGQISYLKAGLFFADHVTTVSPTYAKEITQPAFGYGMEGLLQERASQGRLTGILNGVDSDIWDPQTDTLLHARYDAEDLQKKAVNKTHLQTTMGLEVTEKKPIFAVVSRLTEQKGLDLVLEALPDLLQLGGQLAVLGAGDAILQEAFLAAAADYSGQVGVQIGYHEAFSHRIIAGADVILVPSRFEPCGLTQLYGLKYGTLPLVRHTGGLADTVVDCALENLADGSASGFVFDECDAQALVRAIRRAFVLWSRPKHWRHVQRHAMGLDFGWQVAAADYLSLYRRL.

Lysine 15 contributes to the ADP-alpha-D-glucose binding site.

The protein belongs to the glycosyltransferase 1 family. Bacterial/plant glycogen synthase subfamily.

It carries out the reaction [(1-&gt;4)-alpha-D-glucosyl](n) + ADP-alpha-D-glucose = [(1-&gt;4)-alpha-D-glucosyl](n+1) + ADP + H(+). It participates in glycan biosynthesis; glycogen biosynthesis. In terms of biological role, synthesizes alpha-1,4-glucan chains using ADP-glucose. This chain is Glycogen synthase, found in Yersinia enterocolitica serotype O:8 / biotype 1B (strain NCTC 13174 / 8081).